The following is a 185-amino-acid chain: Peptide deformylase (185 aa).

2 residues coordinate Fe cation: cysteine 109 and histidine 152. Residue glutamate 153 is part of the active site. Histidine 156 serves as a coordination point for Fe cation.

This sequence belongs to the polypeptide deformylase family. Fe(2+) is required as a cofactor.

It catalyses the reaction N-terminal N-formyl-L-methionyl-[peptide] + H2O = N-terminal L-methionyl-[peptide] + formate. Removes the formyl group from the N-terminal Met of newly synthesized proteins. Requires at least a dipeptide for an efficient rate of reaction. N-terminal L-methionine is a prerequisite for activity but the enzyme has broad specificity at other positions. This chain is Peptide deformylase, found in Roseiflexus sp. (strain RS-1).